The primary structure comprises 66 residues: Large ribosomal subunit protein eL24 (66 aa).

The Zn(2+) site is built by Cys6, Cys9, Cys32, and Cys36. Residues 6-36 form a C4-type zinc finger; it reads CSFCGKSIEPASGFLYVRKDGSVLNFCSRKC.

Belongs to the eukaryotic ribosomal protein eL24 family. As to quaternary structure, part of the 50S ribosomal subunit. Forms a cluster with proteins L3 and L14. Zn(2+) is required as a cofactor.

Binds to the 23S rRNA. This chain is Large ribosomal subunit protein eL24, found in Picrophilus torridus (strain ATCC 700027 / DSM 9790 / JCM 10055 / NBRC 100828 / KAW 2/3).